Reading from the N-terminus, the 111-residue chain is Large ribosomal subunit protein uL29 (111 aa).

The interval 1-85 is large ribosomal subunit protein uL29; the sequence is MTVAKELRQK…TKKTNEAAVN (85 aa). The interval 86–111 is unknown; it reads AWKQHLEANKAKLLKSRAKREDASKK.

It belongs to the universal ribosomal protein uL29 family.

The polypeptide is Large ribosomal subunit protein uL29 (Mycoplasma pneumoniae (strain ATCC 29342 / M129 / Subtype 1) (Mycoplasmoides pneumoniae)).